The following is a 245-amino-acid chain: Probable phosphatase PMI1003 (245 aa).

Zn(2+) is bound by residues His7, His9, His15, His40, Glu73, His101, His131, Asp192, and His194.

The protein belongs to the PHP family. In terms of assembly, homotrimer. Zn(2+) is required as a cofactor.

This chain is Probable phosphatase PMI1003, found in Proteus mirabilis (strain HI4320).